The sequence spans 149 residues: Transcriptional repressor NrdR (149 aa).

A zinc finger spans residues 3–34 (CPFCTAEETKVIDSRLAADGYQIRRRRECIGC). The region spanning 49–139 (PYIIKNNGNR…VYLSFDDIEE (91 aa)) is the ATP-cone domain.

It belongs to the NrdR family. Zn(2+) is required as a cofactor.

Negatively regulates transcription of bacterial ribonucleotide reductase nrd genes and operons by binding to NrdR-boxes. This chain is Transcriptional repressor NrdR, found in Haemophilus ducreyi (strain 35000HP / ATCC 700724).